The following is a 485-amino-acid chain: NADH-quinone oxidoreductase subunit N (485 aa).

14 helical membrane passes run 8–28 (LIAL…MLSI), 35–55 (FLNA…LWFV), 75–95 (LYTG…YPWL), 105–125 (FYLL…ANHL), 127–147 (ALFL…GYAF), 159–179 (YTIL…LVYA), 203–223 (LLAG…LVPF), 235–255 (PAPV…GVVM), 271–291 (VVLG…ALSQ), 297–317 (LLGY…IALQ), 326–346 (VGVY…VVSL), 374–394 (AVMT…GFIG), 408–430 (WWLV…RVAV), and 455–475 (IVVL…QPLI).

It belongs to the complex I subunit 2 family. In terms of assembly, NDH-1 is composed of 13 different subunits. Subunits NuoA, H, J, K, L, M, N constitute the membrane sector of the complex.

Its subcellular location is the cell inner membrane. The catalysed reaction is a quinone + NADH + 5 H(+)(in) = a quinol + NAD(+) + 4 H(+)(out). Its function is as follows. NDH-1 shuttles electrons from NADH, via FMN and iron-sulfur (Fe-S) centers, to quinones in the respiratory chain. The immediate electron acceptor for the enzyme in this species is believed to be ubiquinone. Couples the redox reaction to proton translocation (for every two electrons transferred, four hydrogen ions are translocated across the cytoplasmic membrane), and thus conserves the redox energy in a proton gradient. This is NADH-quinone oxidoreductase subunit N from Klebsiella pneumoniae subsp. pneumoniae (strain ATCC 700721 / MGH 78578).